We begin with the raw amino-acid sequence, 525 residues long: Probable alpha-galactosidase A (525 aa).

Positions 1-17 (MHPSMTLLAILPPLVRA) are cleaved as a signal peptide. Cysteine 40 and cysteine 72 are oxidised to a cystine. Residues asparagine 43, asparagine 81, and asparagine 117 are each glycosylated (N-linked (GlcNAc...) asparagine). The cysteines at positions 120 and 150 are disulfide-linked. Catalysis depends on aspartate 148, which acts as the Nucleophile. Asparagine 197 is a glycosylation site (N-linked (GlcNAc...) asparagine). Aspartate 206 acts as the Proton donor in catalysis. In terms of domain architecture, Ricin B-type lectin spans 402–525 (PPDCPMVIPT…GLPSGVDIEA (124 aa)). Intrachain disulfides connect cysteine 422-cysteine 434 and cysteine 459-cysteine 472.

It belongs to the glycosyl hydrolase 27 family.

It is found in the secreted. The enzyme catalyses Hydrolysis of terminal, non-reducing alpha-D-galactose residues in alpha-D-galactosides, including galactose oligosaccharides, galactomannans and galactolipids.. In terms of biological role, hydrolyzes a variety of simple alpha-D-galactoside as well as more complex molecules such as oligosaccharides and polysaccharides. The protein is Probable alpha-galactosidase A (aglA) of Aspergillus clavatus (strain ATCC 1007 / CBS 513.65 / DSM 816 / NCTC 3887 / NRRL 1 / QM 1276 / 107).